The chain runs to 100 residues: Urease subunit gamma (100 aa).

It belongs to the urease gamma subunit family. As to quaternary structure, heterotrimer of UreA (gamma), UreB (beta) and UreC (alpha) subunits. Three heterotrimers associate to form the active enzyme.

Its subcellular location is the cytoplasm. It carries out the reaction urea + 2 H2O + H(+) = hydrogencarbonate + 2 NH4(+). The protein operates within nitrogen metabolism; urea degradation; CO(2) and NH(3) from urea (urease route): step 1/1. This Rhodopseudomonas palustris (strain ATCC BAA-98 / CGA009) protein is Urease subunit gamma.